We begin with the raw amino-acid sequence, 257 residues long: Imidazole glycerol phosphate synthase subunit HisF (257 aa).

Residues D11 and D130 contribute to the active site.

The protein belongs to the HisA/HisF family. In terms of assembly, heterodimer of HisH and HisF.

It is found in the cytoplasm. The enzyme catalyses 5-[(5-phospho-1-deoxy-D-ribulos-1-ylimino)methylamino]-1-(5-phospho-beta-D-ribosyl)imidazole-4-carboxamide + L-glutamine = D-erythro-1-(imidazol-4-yl)glycerol 3-phosphate + 5-amino-1-(5-phospho-beta-D-ribosyl)imidazole-4-carboxamide + L-glutamate + H(+). It functions in the pathway amino-acid biosynthesis; L-histidine biosynthesis; L-histidine from 5-phospho-alpha-D-ribose 1-diphosphate: step 5/9. Its function is as follows. IGPS catalyzes the conversion of PRFAR and glutamine to IGP, AICAR and glutamate. The HisF subunit catalyzes the cyclization activity that produces IGP and AICAR from PRFAR using the ammonia provided by the HisH subunit. This chain is Imidazole glycerol phosphate synthase subunit HisF, found in Xylella fastidiosa (strain M23).